Here is a 1299-residue protein sequence, read N- to C-terminus: Protein prickle (1299 aa).

Gly residues predominate over residues 1–19 (MSSLSTGGGAGGSSGGPGG). Disordered stretches follow at residues 1-24 (MSSLSTGGGAGGSSGGPGGADAAA), 115-181 (ADDG…EVTQ), 241-289 (EEES…PQVP), 368-396 (LPRHFSPSGQGLATPPALGSGGMGLPSSS), and 425-527 (LPPH…DDDS). Positions 145–159 (SPRRSKKLLRSLRAH) are enriched in basic residues. The segment covering 168 to 181 (NDTTTANESSEVTQ) has biased composition (polar residues). Positions 263–272 (PVPPLPPPPA) are enriched in pro residues. The span at 425 to 434 (LPPHHQQHPG) shows a compositional bias: low complexity. Residues 435–445 (AGMGPGPGSGA) are compositionally biased toward gly residues. Positions 457-469 (PGCSANPKYSNAQ) are enriched in polar residues. The region spanning 515 to 623 (MDMQRQSHSD…NVRQLMSARP (109 aa)) is the PET domain. Residues 516–525 (DMQRQSHSDD) are compositionally biased toward basic and acidic residues. 3 LIM zinc-binding domains span residues 622–686 (RPCD…ETLK), 687–747 (PRCS…MFAE), and 748–810 (YCDY…GEPP). Disordered stretches follow at residues 807–865 (GEPP…HQAT), 902–940 (KDLEHGGHMGGGDLTDFSGGRASSTSQNLSPLNSPGDFQ), and 1026–1249 (ADIL…SSSS). Over residues 844–864 (PSSHASSSPPMSPQQQQQHQA) the composition is skewed to low complexity. Polar residues-rich tracts occupy residues 922 to 934 (RASSTSQNLSPLN) and 1070 to 1081 (SLNTPMSTQSAS). Over residues 1089–1101 (SILSGASSSSPMS) the composition is skewed to low complexity. A compositionally biased stretch (basic and acidic residues) spans 1136–1150 (GERERDRDKDKEGGG). Over residues 1151 to 1183 (RHGHGHSSRRRRRRKSSSSSSHHRSGSGHRSHS) the composition is skewed to basic residues. Positions 1216 to 1231 (SPSRQQRERERERERE) are enriched in basic and acidic residues. Over residues 1238 to 1249 (VCSTCSSSSSSS) the composition is skewed to low complexity.

This sequence belongs to the prickle / espinas / testin family. In terms of assembly, interacts with dsh; PET and LIM domains interact with dsh DEP domain, in wing cells. Interacts with Vang in photoreceptor cells. Expressed in the wing, leg and eye imaginal disks. Expressed within the photoreceptors of the eye.

The protein resides in the cell membrane. Acts in a planar cell polarity (PCP) complex; polarization along the apical/basal axis of epithelial cells. Correct expression of the alternative isoforms is required for PCP signaling in imaginal disks. PCP signaling in the wing disk requires the receptor fz and the cytoplasmic proteins dsh and pk. These act in a feedback loop leading to activation of the jnk cascade and subsequent polarized arrangement of hairs and bristles. Dgo and pk compete with one another for dsh binding, thereby modulating fz dsh activity and ensuring tight control over fz PCP signaling. Vang, stan and pk function together to regulate the establishment of tissue polarity in the adult eye. The protein is Protein prickle of Drosophila melanogaster (Fruit fly).